Here is a 47-residue protein sequence, read N- to C-terminus: Ruminococcin-A (47 aa).

The signal sequence occupies residues 1–23 (MRNDVLTLTNPMEENELEQILGG). Thr-30 and Thr-39 each carry 2,3-didehydrobutyrine. Positions 30–35 (TISHEC) form a cross-link, beta-methyllanthionine (Thr-Cys). The lanthionine (Ser-Cys) cross-link spans 32-46 (SHECNMNTWQFLFTC). A cross-link (beta-methyllanthionine (Thr-Cys)) is located at residues 45 to 47 (TCC).

It belongs to the type A lantibiotic family. Maturation of lantibiotics involves the enzymatic conversion of Thr, and Ser into dehydrated AA and the formation of thioether bonds with cysteine. This is followed by membrane translocation and cleavage of the modified precursor.

The protein localises to the secreted. In terms of biological role, lanthionine-containing peptide antibiotic (lantibiotic) active on Gram-positive bacteria. The bactericidal activity of lantibiotics is based on depolarization of energized bacterial cytoplasmic membranes, initiated by the formation of aqueous transmembrane pores. Ruminococcin A is a broad spectrum bacteriocin exhibiting activity against a wide range of pathogenic clostridia and B.longum. The protein is Ruminococcin-A (rumA1) of Blautia hansenii (Ruminococcus hansenii).